Reading from the N-terminus, the 423-residue chain is uncharacterized protein (423 aa).

Residues 383 to 423 (ARGTTGGGGTRSGTSTDGQEDGRKPPVVVIREQPPPGNPPR) form a disordered region.

The protein belongs to the mycobacterial PPE family.

This is an uncharacterized protein from Mycobacterium tuberculosis (strain CDC 1551 / Oshkosh).